A 225-amino-acid chain; its full sequence is ATP-dependent Clp protease proteolytic subunit (225 aa).

The active-site Nucleophile is the Ser123. Residue His148 is part of the active site.

This sequence belongs to the peptidase S14 family. As to quaternary structure, fourteen ClpP subunits assemble into 2 heptameric rings which stack back to back to give a disk-like structure with a central cavity, resembling the structure of eukaryotic proteasomes.

It localises to the cytoplasm. It catalyses the reaction Hydrolysis of proteins to small peptides in the presence of ATP and magnesium. alpha-casein is the usual test substrate. In the absence of ATP, only oligopeptides shorter than five residues are hydrolyzed (such as succinyl-Leu-Tyr-|-NHMec, and Leu-Tyr-Leu-|-Tyr-Trp, in which cleavage of the -Tyr-|-Leu- and -Tyr-|-Trp bonds also occurs).. Its function is as follows. Cleaves peptides in various proteins in a process that requires ATP hydrolysis. Has a chymotrypsin-like activity. Plays a major role in the degradation of misfolded proteins. The sequence is that of ATP-dependent Clp protease proteolytic subunit from Chlorobium chlorochromatii (strain CaD3).